A 519-amino-acid chain; its full sequence is Fatty acid--[acyl-carrier-protein] ligase ScoC (519 aa).

Thr167 lines the Mg(2+) pocket. ATP-binding residues include Ile216 and Thr312. Glu313 serves as a coordination point for Mg(2+). 2 residues coordinate ATP: Asp394 and Lys411.

This sequence belongs to the ATP-dependent AMP-binding enzyme family. It depends on Mg(2+) as a cofactor.

It catalyses the reaction a medium-chain fatty acid + holo-[ACP] + ATP = a medium-chain fatty acyl-[ACP] + AMP + diphosphate. It carries out the reaction a medium-chain fatty acid + ATP + H(+) = a medium-chain fatty acyl-AMP + diphosphate. The enzyme catalyses a medium-chain fatty acyl-AMP + holo-[ACP] = a medium-chain fatty acyl-[ACP] + AMP + H(+). The catalysed reaction is octanoate + holo-[ACP] + ATP = octanoyl-[ACP] + AMP + diphosphate. It catalyses the reaction octanoate + ATP + H(+) = octanoyl-AMP + diphosphate. It carries out the reaction octanoyl-AMP + holo-[ACP] = octanoyl-[ACP] + AMP + H(+). The enzyme catalyses a (2E)-enoyl fatty acid + holo-[ACP] + ATP = a (2E)-enoyl-[ACP] + AMP + diphosphate. The catalysed reaction is a (2E)-enoyl fatty acid + ATP + H(+) = a (2E)-2-fatty-enoyl-AMP + diphosphate. It catalyses the reaction a (2E)-2-fatty-enoyl-AMP + holo-[ACP] = a (2E)-enoyl-[ACP] + AMP + H(+). It carries out the reaction (2E)-2-butenoate + holo-[ACP] + ATP = (2E)-butenoyl-[ACP] + AMP + diphosphate. The enzyme catalyses (2E)-2-butenoate + ATP + H(+) = (2E)-but-2-enoyl-AMP + diphosphate. The catalysed reaction is (2E)-but-2-enoyl-AMP + holo-[ACP] = (2E)-butenoyl-[ACP] + AMP + H(+). It catalyses the reaction a (3R)-3-isocyanyl-fatty acid + holo-[ACP] + ATP = a (3R)-3-isocyanyl-fatty acyl-[ACP] + AMP + diphosphate. It carries out the reaction a (3R)-3-isocyanyl-fatty acid + ATP + H(+) = a (3R)-3-isocyanyl-fatty acyl-AMP + diphosphate. The enzyme catalyses a (3R)-3-isocyanyl-fatty acyl-AMP + holo-[ACP] = a (3R)-3-isocyanyl-fatty acyl-[ACP] + AMP + H(+). The catalysed reaction is (3R)-3-isocyanylbutanoate + holo-[ACP] + ATP = (3R)-3-isocyanylbutanoyl-[ACP] + AMP + diphosphate. It catalyses the reaction (3R)-3-isocyanylbutanoate + ATP + H(+) = (3R)-3-isocyanylbutanoyl-AMP + diphosphate. It carries out the reaction (3R)-3-isocyanylbutanoyl-AMP + holo-[ACP] = (3R)-3-isocyanylbutanoyl-[ACP] + AMP + H(+). Its function is as follows. Acyl:acyl-carrier protein ligase involved in the biosynthesis of a unique class of isonitrile lipopeptides (INLPs). Shows a strong preference for fatty acids with a short/medium-chain length (C4-C8) in vitro, and accepts alpha,beta-unsaturated fatty acids such as crotonate, which seems to be a physiological substrate. Acts twice during the INLP pathway, catalyzing the activation of crotonate ((2E)-2-butenoate) as well as (3R)-3-isocyanylbutanoate as acyl-adenylates (acyl-AMP), and then the acyl transfer to the dedicated acyl-carrier protein ScoB. In Streptomyces coeruleorubidus, this protein is Fatty acid--[acyl-carrier-protein] ligase ScoC.